The primary structure comprises 765 residues: Kinesin-like protein KIN-14S (765 aa).

In terms of domain architecture, Kinesin motor spans 132–456 (NIRVFCRCRP…LNFASRVRGI (325 aa)). 215-222 (GQTGTGKT) provides a ligand contact to ATP. A coiled-coil region spans residues 469-534 (ELLKSKQMAE…ERKTRIKQES (66 aa)). Disordered regions lie at residues 581–613 (MPQQ…SSMD) and 654–678 (LRPE…RGDP). Residues 602–611 (NNNSNRRSSS) show a composition bias toward low complexity.

This sequence belongs to the TRAFAC class myosin-kinesin ATPase superfamily. Kinesin family. KIN-14 subfamily.

The chain is Kinesin-like protein KIN-14S from Arabidopsis thaliana (Mouse-ear cress).